The sequence spans 315 residues: MRSGGRCNSIENYEKVCRISSGSFGNVYRVRRKTDNRVFALKRMNPSMCYDTNGFSILYIREVMILKHIRHRNIMEIEEVVEGCEINDFFIVMECCDTDLRSVIHSVGKIGMKAARFLTCQMLKGLKFLHGAGIVHRDLKPSNILLMRDGGLRIADFGLARAIESQMTNLVVTLWYRPIEILLGSETYDESIDMWSVGCVVGEMLRGEPILAGEGEMDQLDRIFRLLGYPTDADFEGLDLPHFKNIRRPSTFEASFEGDFECYGEEAASFVRNLLSFDPRKRCTASQGLCSGFVADAEECPGELVDIVGRCTGDI.

In terms of domain architecture, Protein kinase spans Y13–V294. Residues I19–V27 and K42 each bind ATP. D138 functions as the Proton acceptor in the catalytic mechanism.

The protein belongs to the protein kinase superfamily. CMGC Ser/Thr protein kinase family. CDC2/CDKX subfamily.

The protein resides in the nucleus. It catalyses the reaction L-seryl-[protein] + ATP = O-phospho-L-seryl-[protein] + ADP + H(+). The catalysed reaction is L-threonyl-[protein] + ATP = O-phospho-L-threonyl-[protein] + ADP + H(+). In terms of biological role, may play a role in the control of the eukaryotic cell cycle. The sequence is that of Probable cell division protein kinase ECU11_1290 from Encephalitozoon cuniculi (strain GB-M1) (Microsporidian parasite).